The primary structure comprises 459 residues: Beta-glucosidase (459 aa).

Glu171 functions as the Proton donor in the catalytic mechanism. Glu359 functions as the Nucleophile in the catalytic mechanism.

It belongs to the glycosyl hydrolase 1 family.

The enzyme catalyses Hydrolysis of terminal, non-reducing beta-D-glucosyl residues with release of beta-D-glucose.. This Agrobacterium sp. (strain ATCC 21400) protein is Beta-glucosidase (abg).